A 969-amino-acid polypeptide reads, in one-letter code: Surface protein P113 (969 aa).

An N-terminal signal peptide occupies residues 1–22 (MKIPFFILHILLLQFLLCLIRC). Residue N207 is glycosylated (N-linked (GlcNAc...) asparagine). Residues 223–328 (IGDESTDSSS…TDTLVNNKEN (106 aa)) form a disordered region. Residues 229 to 241 (DSSSMEIQDSTSN) are compositionally biased toward polar residues. N268 carries N-linked (GlcNAc...) asparagine glycosylation. Positions 300–311 (KNEDNKDLEHGS) are enriched in basic and acidic residues. Positions 312–325 (SNDVNNNTDTLVNN) are enriched in low complexity. N317, N360, N661, and N697 each carry an N-linked (GlcNAc...) asparagine glycan. Residues 688–705 (SSNFNIFDSNNTDQNNEQ) are compositionally biased toward polar residues. The tract at residues 688–947 (SSNFNIFDSN…NETNKTDNGS (260 aa)) is disordered. Over residues 713-727 (QLLNNNNDDVLSESN) the composition is skewed to low complexity. Residues 728-749 (NENKEKTSDDATHKETQEKSDQ) show a composition bias toward basic and acidic residues. A glycan (N-linked (GlcNAc...) asparagine) is linked at N779. A compositionally biased stretch (acidic residues) spans 798 to 811 (EGTEELQQNDEDAE). A compositionally biased stretch (basic and acidic residues) spans 812–822 (SLTKENSKSEE). The segment covering 823–841 (QENEDSTDAEAIDKEEVET) has biased composition (acidic residues). Residues 842–854 (EEKGKDEQKKDEQ) are compositionally biased toward basic and acidic residues. Residues 855–864 (KEQDEEEDGE) show a composition bias toward acidic residues. N876 carries an N-linked (GlcNAc...) asparagine glycan. A compositionally biased stretch (basic and acidic residues) spans 883-896 (EENKNEVKGEEHLQ). Residues 897–907 (GSEQSIEASES) are compositionally biased toward low complexity. Basic and acidic residues predominate over residues 908-917 (SQKDETKETE). A compositionally biased stretch (acidic residues) spans 918 to 936 (DKEEYVNANDDESSEEDTT). Over residues 937–947 (PNETNKTDNGS) the composition is skewed to polar residues. N938, N941, and N945 each carry an N-linked (GlcNAc...) asparagine glycan. The GPI-anchor amidated asparagine moiety is linked to residue N945. A propeptide spans 946-969 (GSSFFFAMSNALLVILLLLFIEFL) (removed in mature form).

As to quaternary structure, forms a complex composed of RH5, P113 and human BSG/basigin; the complex bridges the merozoite and host erythrocyte membranes. Within the complex, interacts with RH5 (via N-terminus); the interaction tethers RH5 to the merozoite membrane.

Its subcellular location is the cell membrane. Membrane receptor which tethers secreted RH5 to the merozoite membrane during merozoite invasion of host erythocytes. The polypeptide is Surface protein P113 (Plasmodium falciparum (isolate 3D7)).